A 975-amino-acid chain; its full sequence is Probable dipeptidyl-aminopeptidase B (975 aa).

Positions 1-20 (MAEHGHNMWEEEPSKGRDSL) are enriched in basic and acidic residues. A disordered region spans residues 1 to 111 (MAEHGHNMWE…LSAASGSAGK (111 aa)). Over 1–125 (MAEHGHNMWE…YRMMDRGLRR (125 aa)) the chain is Cytoplasmic. Low complexity predominate over residues 22–31 (SDSSASTTSL). Over residues 68 to 84 (LDDEDPLKDEASGDYDL) the composition is skewed to acidic residues. A helical; Signal-anchor for type II membrane protein transmembrane segment spans residues 126–146 (VLIIASLVFVTAWVGGLFIYI). At 147-975 (SHKSYLHGSE…IDNAKPQGKR (829 aa)) the chain is on the vacuolar side. N-linked (GlcNAc...) asparagine glycosylation is found at Asn207, Asn397, and Asn622. Residue Ser826 is the Charge relay system of the active site. A glycan (N-linked (GlcNAc...) asparagine) is linked at Asn885. Catalysis depends on charge relay system residues Asp903 and His936.

Belongs to the peptidase S9B family.

The protein localises to the vacuole membrane. It carries out the reaction Release of an N-terminal dipeptide, Xaa-Yaa-|-Zaa-, from a polypeptide, preferentially when Yaa is Pro, provided Zaa is neither Pro nor hydroxyproline.. In terms of biological role, type IV dipeptidyl-peptidase which removes N-terminal dipeptides sequentially from polypeptides having unsubstituted N-termini provided that the penultimate residue is proline. The protein is Probable dipeptidyl-aminopeptidase B (DAPB) of Grosmannia clavigera (strain kw1407 / UAMH 11150) (Blue stain fungus).